The sequence spans 242 residues: Adenylate kinase 1 (242 aa).

ATP contacts are provided by residues 38-43 (GSGKGT) and G42. Residues 58-87 (STGDLLREAAEKKTELGLKIKNIINEGKLV) form an NMP region. Residues T59, R64, 85-87 (KLV), G113, 113-116 (GYPR), and Q120 contribute to the AMP site. The LID stretch occupies residues 154–191 (GRLIHKPSGRIYHKIFNPPKVPFRDDVTNEPLIQREDD). Residues R155 and Y165 each coordinate ATP. AMP is bound at residue R199. Position 229 (A229) interacts with ATP.

This sequence belongs to the adenylate kinase family.

It localises to the cytoplasm. The enzyme catalyses AMP + ATP = 2 ADP. Its activity is regulated as follows. Inhibited by the dinucleoside pentaphosphate compound P1,P5-di(adenosine-5') pentaphosphate (AP5A). Its function is as follows. Catalyzes the reversible transfer of the terminal phosphate group between ATP and AMP. Has very low activity with CTP, GTP, ITP and UTP and no activity with GMP, CMP, UMP or IMP in vitro. In Plasmodium falciparum (isolate 3D7), this protein is Adenylate kinase 1.